The following is a 216-amino-acid chain: Adenylate kinase (216 aa).

Gly-10 to Thr-15 is a binding site for ATP. An NMP region spans residues Ser-30–Val-59. Residues Thr-31, Arg-36, Ala-57–Val-59, Gly-85–Arg-88, and Gln-92 contribute to the AMP site. Residues Gly-126 to Asp-163 are LID. Position 127 (Arg-127) interacts with ATP. Positions 130 and 133 each coordinate Zn(2+). Thr-136 to Tyr-137 contributes to the ATP binding site. Zn(2+) contacts are provided by Cys-150 and Cys-153. AMP contacts are provided by Arg-160 and Arg-171. Gln-199 is a binding site for ATP.

It belongs to the adenylate kinase family. As to quaternary structure, monomer.

The protein localises to the cytoplasm. The enzyme catalyses AMP + ATP = 2 ADP. It participates in purine metabolism; AMP biosynthesis via salvage pathway; AMP from ADP: step 1/1. Functionally, catalyzes the reversible transfer of the terminal phosphate group between ATP and AMP. Plays an important role in cellular energy homeostasis and in adenine nucleotide metabolism. The polypeptide is Adenylate kinase (Bacillus mycoides (strain KBAB4) (Bacillus weihenstephanensis)).